A 390-amino-acid chain; its full sequence is Dual-specificity RNA methyltransferase RlmN (390 aa).

The active-site Proton acceptor is the Glu110. Residues 116-355 form the Radical SAM core domain; it reads EADRATLCVS…VIIRKTRGDD (240 aa). Cys123 and Cys360 are joined by a disulfide. Positions 130, 134, and 137 each coordinate [4Fe-4S] cluster. Residues 184–185, Ser216, 238–240, and Asn317 each bind S-adenosyl-L-methionine; these read GE and SLH. Cys360 functions as the S-methylcysteine intermediate in the catalytic mechanism.

Belongs to the radical SAM superfamily. RlmN family. It depends on [4Fe-4S] cluster as a cofactor.

It localises to the cytoplasm. The catalysed reaction is adenosine(2503) in 23S rRNA + 2 reduced [2Fe-2S]-[ferredoxin] + 2 S-adenosyl-L-methionine = 2-methyladenosine(2503) in 23S rRNA + 5'-deoxyadenosine + L-methionine + 2 oxidized [2Fe-2S]-[ferredoxin] + S-adenosyl-L-homocysteine. The enzyme catalyses adenosine(37) in tRNA + 2 reduced [2Fe-2S]-[ferredoxin] + 2 S-adenosyl-L-methionine = 2-methyladenosine(37) in tRNA + 5'-deoxyadenosine + L-methionine + 2 oxidized [2Fe-2S]-[ferredoxin] + S-adenosyl-L-homocysteine. Specifically methylates position 2 of adenine 2503 in 23S rRNA and position 2 of adenine 37 in tRNAs. m2A2503 modification seems to play a crucial role in the proofreading step occurring at the peptidyl transferase center and thus would serve to optimize ribosomal fidelity. This chain is Dual-specificity RNA methyltransferase RlmN, found in Haemophilus influenzae (strain ATCC 51907 / DSM 11121 / KW20 / Rd).